The chain runs to 349 residues: MEFLQGILGTDAGLLVWTLLKIIAIVLPMLGCVAYLTLAERKVIGYMQIRIGPNRVGPFGLLQPIADAVKLLMKEIILPTNSSKGLFLLAPVLSIGPALAAWAVIPFTDKLVLANVNASLLYILALTSMGVYGVIIAGWAGNSKYSFLGAMRSAAQIVSYELAMGFALVGVLMVSGSLNLVDIVHQQSFGKGGGSILSWNWIPLFPLFIVYLISGVAETNRAPFDVAEGESEIVAGFHVEYSGMAFAIFFLAEYANMILVAALTSLLFLGGWLSPFPASWGILGAGGFFWLAVKMALVLFCFLWFRATFPRYRYDQIMRLGWKVFIPVTLVWILVVGAWMFSPLSIWKL.

8 consecutive transmembrane segments (helical) span residues 14 to 34 (LLVW…GCVA), 85 to 105 (GLFL…WAVI), 120 to 140 (LLYI…AGWA), 164 to 184 (MGFA…VDIV), 196 to 216 (ILSW…ISGV), 243 to 263 (GMAF…VAAL), 285 to 305 (AGGF…FLWF), and 324 to 344 (VFIP…FSPL).

This sequence belongs to the complex I subunit 1 family. In terms of assembly, NDH-1 is composed of 14 different subunits. Subunits NuoA, H, J, K, L, M, N constitute the membrane sector of the complex.

The protein localises to the cell inner membrane. It catalyses the reaction a quinone + NADH + 5 H(+)(in) = a quinol + NAD(+) + 4 H(+)(out). Its function is as follows. NDH-1 shuttles electrons from NADH, via FMN and iron-sulfur (Fe-S) centers, to quinones in the respiratory chain. The immediate electron acceptor for the enzyme in this species is believed to be ubiquinone. Couples the redox reaction to proton translocation (for every two electrons transferred, four hydrogen ions are translocated across the cytoplasmic membrane), and thus conserves the redox energy in a proton gradient. This subunit may bind ubiquinone. The chain is NADH-quinone oxidoreductase subunit H from Chromobacterium violaceum (strain ATCC 12472 / DSM 30191 / JCM 1249 / CCUG 213 / NBRC 12614 / NCIMB 9131 / NCTC 9757 / MK).